The chain runs to 132 residues: Myelin P2 protein (132 aa).

Ser-2 bears the N-acetylserine mark. Residue Arg-107 participates in (9Z)-octadecenoate binding. A hexadecanoate-binding site is contributed by Arg-107. Cys-118 and Cys-125 are joined by a disulfide. A (9Z)-octadecenoate-binding site is contributed by 127 to 129 (RIY). Position 127-129 (127-129 (RIY)) interacts with hexadecanoate.

It belongs to the calycin superfamily. Fatty-acid binding protein (FABP) family. Monomer.

Its subcellular location is the cytoplasm. Functionally, may play a role in lipid transport protein in Schwann cells. May bind cholesterol. This Bos taurus (Bovine) protein is Myelin P2 protein (PMP2).